A 107-amino-acid polypeptide reads, in one-letter code: Ig kappa chain V-VI region NQ2-17.4.1 (107 aa).

The framework-1 stretch occupies residues 1-23 (QIVLTQSPAIMSASPGQKVTMTC). Cysteine 23 and cysteine 87 form a disulfide bridge. Residues 24–33 (SASSSVSYMH) form a complementarity-determining-1 region. Positions 34 to 48 (WYQQKSGTSPKRWIY) are framework-2. A complementarity-determining-2 region spans residues 49–55 (DTSKLAS). The framework-3 stretch occupies residues 56–87 (GVPARFSGSGSATSYSLTITSMQAEDAATYYC). Positions 88-96 (QQWSSNPLT) are complementarity-determining-3. The framework-4 stretch occupies residues 97 to 106 (FGAGTKLELK).

In terms of biological role, anti-2-phenyl oxazolone (PHOX) Antibody. In Mus musculus (Mouse), this protein is Ig kappa chain V-VI region NQ2-17.4.1.